The sequence spans 386 residues: Putative membrane-bound transacylase BcsY (386 aa).

Helical transmembrane passes span 37 to 57 (LAIA…FIGV), 91 to 111 (LLPA…WWVL), 118 to 138 (IALN…SGHV), 156 to 176 (LSLE…LPLT), 181 to 201 (LVLS…WHTG), 237 to 257 (AVYA…PLSY), 258 to 278 (ACPS…IMLP), 290 to 310 (LSPL…GIVV), 322 to 342 (AMMA…YVLV), and 362 to 382 (AALL…ISHV).

Belongs to the acyltransferase 3 family.

Its subcellular location is the cell inner membrane. Its pathway is glycan metabolism; bacterial cellulose biosynthesis. In terms of biological role, may acylate a glucose moiety into cellulose fibrils, in cooperation with BcsABII and BcsCII. The protein is Putative membrane-bound transacylase BcsY (bcsY) of Komagataeibacter xylinus (Gluconacetobacter xylinus).